We begin with the raw amino-acid sequence, 1169 residues long: Translation initiation factor IF-2 (1169 aa).

Disordered stretches follow at residues 69–108 (IKAK…PLLI) and 139–568 (ALSK…LRAA). 2 stretches are compositionally biased toward basic and acidic residues: residues 71 to 83 (AKNE…DNKN) and 92 to 102 (HPEKLSKEGLN). Over residues 139-156 (ALSKNQNKTNTSVITTPN) the composition is skewed to polar residues. Over residues 157-171 (LKDKKNPSALQDKKP) the composition is skewed to basic and acidic residues. The span at 196–214 (NLANSNRNINANKINNSVN) shows a compositional bias: low complexity. Polar residues predominate over residues 231-248 (ADNNNFPKKNLNSPNVKS). Positions 265-281 (NTNRPNSNSRQPSSNTQ) are enriched in low complexity. Polar residues-rich tracts occupy residues 282-294 (ISAN…NRQG), 412-432 (MQLQ…NVNK), and 439-455 (NQKT…SPSP). Positions 472 to 486 (GRTDWDDSAKLEALR) are enriched in basic and acidic residues. Over residues 544–560 (KQFKKKKKETTRQRQKR) the composition is skewed to basic residues. The region spanning 661 to 838 (KRPPVITVMG…EVEDLQANPE (178 aa)) is the tr-type G domain. The tract at residues 670–677 (GHVDHGKT) is G1. 670 to 677 (GHVDHGKT) provides a ligand contact to GTP. Residues 695–699 (GITQH) are G2. Positions 720-723 (DTPG) are G3. Residues 720–724 (DTPGH) and 774–777 (NKID) each bind GTP. The interval 774-777 (NKID) is G4. Residues 810 to 812 (SAI) are G5.

Belongs to the TRAFAC class translation factor GTPase superfamily. Classic translation factor GTPase family. IF-2 subfamily.

It localises to the cytoplasm. One of the essential components for the initiation of protein synthesis. Protects formylmethionyl-tRNA from spontaneous hydrolysis and promotes its binding to the 30S ribosomal subunits. Also involved in the hydrolysis of GTP during the formation of the 70S ribosomal complex. This is Translation initiation factor IF-2 from Prochlorococcus marinus subsp. pastoris (strain CCMP1986 / NIES-2087 / MED4).